The sequence spans 272 residues: Shikimate dehydrogenase (NADP(+)) (272 aa).

Shikimate is bound by residues 14 to 16 (SKS) and Thr-61. The Proton acceptor role is filled by Lys-65. Glu-77 lines the NADP(+) pocket. 2 residues coordinate shikimate: Asn-86 and Asp-102. NADP(+) contacts are provided by residues 126 to 130 (GAGGA), 149 to 154 (NRTVSR), and Met-213. Tyr-215 lines the shikimate pocket. Gly-237 provides a ligand contact to NADP(+).

It belongs to the shikimate dehydrogenase family. Homodimer.

It carries out the reaction shikimate + NADP(+) = 3-dehydroshikimate + NADPH + H(+). The protein operates within metabolic intermediate biosynthesis; chorismate biosynthesis; chorismate from D-erythrose 4-phosphate and phosphoenolpyruvate: step 4/7. Its function is as follows. Involved in the biosynthesis of the chorismate, which leads to the biosynthesis of aromatic amino acids. Catalyzes the reversible NADPH linked reduction of 3-dehydroshikimate (DHSA) to yield shikimate (SA). The chain is Shikimate dehydrogenase (NADP(+)) from Shigella sonnei (strain Ss046).